We begin with the raw amino-acid sequence, 53 residues long: UPF0337 protein LJ_0034.1 (53 aa).

Residues 27–53 (AREVEGKAQQAKGKVKSKATEVKEDLE) form a disordered region. The segment covering 44–53 (KATEVKEDLE) has biased composition (basic and acidic residues).

Belongs to the UPF0337 (CsbD) family.

This chain is UPF0337 protein LJ_0034.1, found in Lactobacillus johnsonii (strain CNCM I-12250 / La1 / NCC 533).